The primary structure comprises 361 residues: Phospho-N-acetylmuramoyl-pentapeptide-transferase (361 aa).

The next 10 membrane-spanning stretches (helical) occupy residues 28 to 48 (LAAL…IRSL), 73 to 93 (TMGG…WADL), 97 to 117 (YIWV…VDDY), 134 to 154 (FFWQ…TADL), 168 to 188 (VAIP…IVGT), 200 to 220 (GLAI…AYVA), 237 to 257 (AGEL…FLWF), 264 to 284 (VFMG…ITVI), 289 to 309 (IVLV…MIQV), and 338 to 358 (QVVV…LSTL).

This sequence belongs to the glycosyltransferase 4 family. MraY subfamily. Requires Mg(2+) as cofactor.

The protein resides in the cell inner membrane. The catalysed reaction is UDP-N-acetyl-alpha-D-muramoyl-L-alanyl-gamma-D-glutamyl-meso-2,6-diaminopimeloyl-D-alanyl-D-alanine + di-trans,octa-cis-undecaprenyl phosphate = di-trans,octa-cis-undecaprenyl diphospho-N-acetyl-alpha-D-muramoyl-L-alanyl-D-glutamyl-meso-2,6-diaminopimeloyl-D-alanyl-D-alanine + UMP. It functions in the pathway cell wall biogenesis; peptidoglycan biosynthesis. Its function is as follows. Catalyzes the initial step of the lipid cycle reactions in the biosynthesis of the cell wall peptidoglycan: transfers peptidoglycan precursor phospho-MurNAc-pentapeptide from UDP-MurNAc-pentapeptide onto the lipid carrier undecaprenyl phosphate, yielding undecaprenyl-pyrophosphoryl-MurNAc-pentapeptide, known as lipid I. The chain is Phospho-N-acetylmuramoyl-pentapeptide-transferase from Nitrosomonas europaea (strain ATCC 19718 / CIP 103999 / KCTC 2705 / NBRC 14298).